Here is a 269-residue protein sequence, read N- to C-terminus: Probable molybdenum ABC transporter permease protein HVO_B0370 (269 aa).

The next 6 helical transmembrane spans lie at 26-46, 69-89, 100-120, 140-160, 198-218, and 243-263; these read LLLAGVLLLYYLLPIGALVFA, VVAATLSTLVAVAFGVPLAYW, VILALVMLPLVLPPVVSGMLL, SLFGVVLAQTYVASPFLVVTA, ILAGVTLTFARAIGEFGATLM, and FPVALVLVGIAVGAILLVHAL. Positions 65–258 constitute an ABC transmembrane type-1 domain; it reads ATNSVVAATL…LVGIAVGAIL (194 aa).

This sequence belongs to the binding-protein-dependent transport system permease family. The complex is composed of two ATP-binding proteins, two transmembrane proteins (HVO_B0370) and a solute-binding protein (HVO_B0369).

It localises to the cell membrane. Part of an ABC transporter complex involved in molybdenum import. Responsible for the translocation of the substrate across the membrane. The sequence is that of Probable molybdenum ABC transporter permease protein HVO_B0370 from Haloferax volcanii (strain ATCC 29605 / DSM 3757 / JCM 8879 / NBRC 14742 / NCIMB 2012 / VKM B-1768 / DS2) (Halobacterium volcanii).